Consider the following 81-residue polypeptide: MVNKQQNNLQDIFLNNARKNKIQIIIHLVNGFQLKGTVKGFDNFTVILDCDNKQMLIYKHAISTITPTKPILFADNEYETT.

The 61-residue stretch at 11-71 (DIFLNNARKN…ISTITPTKPI (61 aa)) folds into the Sm domain.

Belongs to the Hfq family. As to quaternary structure, homohexamer.

Its function is as follows. RNA chaperone that binds small regulatory RNA (sRNAs) and mRNAs to facilitate mRNA translational regulation in response to envelope stress, environmental stress and changes in metabolite concentrations. Also binds with high specificity to tRNAs. This Clostridium beijerinckii (strain ATCC 51743 / NCIMB 8052) (Clostridium acetobutylicum) protein is RNA-binding protein Hfq.